Reading from the N-terminus, the 985-residue chain is Invasin (985 aa).

The interval 494–594 (SVTVQQPQLT…RQSVDTHFVK (101 aa)) is D1. The Extracellular portion of the chain corresponds to 494 to 985 (SVTVQQPQLT…LAFPLCALAI (492 aa)). Big-1 domains lie at 503 to 594 (TLTA…HFVK) and 601 to 691 (KSTL…VNFT). The tract at residues 595 to 694 (GTIAADKSTL…SVTVNFTADP (100 aa)) is D2. A D3 region spans residues 695 to 794 (IPDAGRSSFT…LQKKISLFPV (100 aa)). The D4 stretch occupies residues 795 to 886 (PTLTGILVNG…YSVSYRFYPN (92 aa)). Residues 795-985 (PTLTGILVNG…LAFPLCALAI (191 aa)) form an integrin-binding region. Positions 887 to 985 (RWIYDGGTSL…LAFPLCALAI (99 aa)) are D5. A disulfide bridge links Cys-906 with Cys-981.

This sequence belongs to the intimin/invasin family.

It localises to the cell surface. Its function is as follows. Invasin is a protein that allows enteric bacteria to penetrate cultured mammalian cells. The entry of invasin in the cell is mediated by binding several beta-1 chain integrins. The protein is Invasin of Yersinia pseudotuberculosis serotype I (strain IP32953).